The following is a 691-amino-acid chain: Elongation factor G (691 aa).

The tr-type G domain maps to 8–283 (KKVRNIGIAA…AVVAYLPAPD (276 aa)). GTP is bound by residues 17–24 (AHIDAGKT), 81–85 (DTPGH), and 135–138 (NKMD).

Belongs to the TRAFAC class translation factor GTPase superfamily. Classic translation factor GTPase family. EF-G/EF-2 subfamily.

The protein resides in the cytoplasm. Functionally, catalyzes the GTP-dependent ribosomal translocation step during translation elongation. During this step, the ribosome changes from the pre-translocational (PRE) to the post-translocational (POST) state as the newly formed A-site-bound peptidyl-tRNA and P-site-bound deacylated tRNA move to the P and E sites, respectively. Catalyzes the coordinated movement of the two tRNA molecules, the mRNA and conformational changes in the ribosome. This is Elongation factor G from Campylobacter jejuni subsp. doylei (strain ATCC BAA-1458 / RM4099 / 269.97).